Here is a 1070-residue protein sequence, read N- to C-terminus: DNA-directed RNA polymerase subunit beta (1070 aa).

Belongs to the RNA polymerase beta chain family. In plastids the minimal PEP RNA polymerase catalytic core is composed of four subunits: alpha, beta, beta', and beta''. When a (nuclear-encoded) sigma factor is associated with the core the holoenzyme is formed, which can initiate transcription.

The protein resides in the plastid. Its subcellular location is the chloroplast. The enzyme catalyses RNA(n) + a ribonucleoside 5'-triphosphate = RNA(n+1) + diphosphate. In terms of biological role, DNA-dependent RNA polymerase catalyzes the transcription of DNA into RNA using the four ribonucleoside triphosphates as substrates. The chain is DNA-directed RNA polymerase subunit beta from Citrus sinensis (Sweet orange).